A 523-amino-acid polypeptide reads, in one-letter code: Cryptochrome DASH (523 aa).

The region spanning 6–142 (RVIICLLRND…KYQTFWGSTL (137 aa)) is the Photolyase/cryptochrome alpha/beta domain. 2 disordered regions span residues 174–211 (RPTF…TDPR) and 486–523 (KPAG…NKDV). Over residues 496 to 510 (RRGKGPSHTPKQHKN) the composition is skewed to basic residues.

This sequence belongs to the DNA photolyase class-1 family. The cofactor is FAD. Requires (6R)-5,10-methylene-5,6,7,8-tetrahydrofolate as cofactor.

Its function is as follows. May have a photoreceptor function. Has weak cyclobutyl pyrimidine photolyase activity when expressed in E.coli and when tested in vitro. The protein is Cryptochrome DASH (cry-dash) of Xenopus laevis (African clawed frog).